Consider the following 335-residue polypeptide: MKFCKKYEEYMQGQKEKKNLPGVGFKKLKKILKRCRRNHVPSRISFTDAINHNCSRECPVCDGTFFPELLKEMEDVVGWFNEHAQKLLELHLASGFTKCLTWLRGNSRKKDHHGLIQEGKDLVNYALINAVAIRKILKKYDKIHESRQGQAFKTQVQKMRIEILQSPWLCELMAFHINLKESKKESGATITSPPPPVHALFDGCALTFDDGKPLLSCELSDSVKVDIDLTCSICLDTVFDPISLTCGHIYCYMCACSAASVNVVDGLKTAEATEKCPLCREDGVYKGAVHLDELNILLKRSCRDYWEERRKTERAERLQQAKEYWDYQCRSFTGI.

The SPX domain maps to methionine 1–threonine 154. The RING-type zinc finger occupies cysteine 231–arginine 280.

Interacts with UBC8. Interacts with PHT1-1 and PHT1-4. Forms homodimers (via RING domain). Interacts with UBC24/PHO2. Interacts with NPF2.13/NRT1.7. Interacts with NAC92/ORE1. High expression in roots and stems, medium in seedlings, flowers, rosette and cauline leaves, and very low in siliques. Detected in cotyledons, hypocotyls, pedicel, receptacle, pistil, sepal, filament of stamen and at the two ends of developing siliques.

It localises to the nucleus speckle. It is found in the nucleus. The protein resides in the cell membrane. It carries out the reaction S-ubiquitinyl-[E2 ubiquitin-conjugating enzyme]-L-cysteine + [acceptor protein]-L-lysine = [E2 ubiquitin-conjugating enzyme]-L-cysteine + N(6)-ubiquitinyl-[acceptor protein]-L-lysine.. Its pathway is protein modification; protein ubiquitination. E3 ubiquitin-protein ligase that mediates E2-dependent protein ubiquitination. Plays a role in salicylic acid-mediated negative feedback regulation of salicylic acid (SA) accumulation. May be involved in the overall regulation of SA, benzoic acid and phenylpropanoid biosynthesis. Involved in defense response. May act as negative regulator of resistance to the necrotrophic fungal pathogen Plectosphaerella cucumerina by modulating the accumulation of the phytoalexin camalexin and the salicylic acid- and jasmonate- dependent defense pathways. Controls the adaptability to nitrogen limitation by channeling the phenylpropanoid metabolic flux to the induced anthocyanin synthesis. Involved in the regulation of inorganic phosphate (Pi) homeostasis in a nitrate-dependent fashion. Directs the ubiquitination and subsequent degradation of the plasma membrane-localized inorganic phosphate transporters PHT1-1 and PHT1-4, to maintain phosphate homeostasis. The ubiquitination of PHTs triggers their clathrin-dependent endocytosis and trafficking to the vacuole through the endosomal pathway for degradation. Functions cooperatively with UBC24/PHO2 to regulate the abundance of PHT1-1, PHT1-2 and PHT1-3 in different subcellular compartments. Regulates Pi homeostasis by mediating, cooperatively with UBC24/PHO2, polyubiquitination of PHT1-4 and its targeting for degradation. Directs the polyubiquitination and subsequent degradation of the plasma membrane-localized nitrate transporter NPF2.13/NRT1.7, to help plants to adapt to nitrogen deficiency by regulating the source-to-sink remobilization of nitrate. Regulates leaf senescence during nitrogen deficiency by mediating, cooperatively with UBC24/PHO2, polyubiquitination of NAC92/ORE1 and its targeting for degradation. This Arabidopsis thaliana (Mouse-ear cress) protein is E3 ubiquitin-protein ligase NLA.